A 96-amino-acid polypeptide reads, in one-letter code: MMSLSFMLGLIFPVFFMFTLANPMSLLLLLLIMSLCAVLWLGSIMSSWFAYILFIVYIGGILVLFIYVCMISSNYITGLYKYKTLLYVGMVVALMS.

2 consecutive transmembrane segments (helical) span residues 24–44 (MSLL…LGSI) and 48–68 (WFAY…FIYV).

Belongs to the complex I subunit 6 family.

It is found in the mitochondrion membrane. The enzyme catalyses a ubiquinone + NADH + 5 H(+)(in) = a ubiquinol + NAD(+) + 4 H(+)(out). Its function is as follows. Core subunit of the mitochondrial membrane respiratory chain NADH dehydrogenase (Complex I) that is believed to belong to the minimal assembly required for catalysis. Complex I functions in the transfer of electrons from NADH to the respiratory chain. The immediate electron acceptor for the enzyme is believed to be ubiquinone. This chain is NADH-ubiquinone oxidoreductase chain 6 (ND6), found in Albinaria turrita (Door snail).